The following is a 174-amino-acid chain: UPF0336 protein MAP_3996c (174 aa).

Residues 11 to 131 form the MaoC-like domain; it reads IGSHYRAPDY…VLAEIRSEVT (121 aa).

The protein belongs to the UPF0336 family.

The polypeptide is UPF0336 protein MAP_3996c (Mycolicibacterium paratuberculosis (strain ATCC BAA-968 / K-10) (Mycobacterium paratuberculosis)).